Reading from the N-terminus, the 195-residue chain is Guanylate kinase (195 aa).

Residues 5–183 (GILFVISGPS…ALQKITAIII (179 aa)) enclose the Guanylate kinase-like domain. ATP is bound at residue 12–19 (GPSGVGKG).

This sequence belongs to the guanylate kinase family.

It localises to the cytoplasm. The catalysed reaction is GMP + ATP = GDP + ADP. Functionally, essential for recycling GMP and indirectly, cGMP. In Syntrophomonas wolfei subsp. wolfei (strain DSM 2245B / Goettingen), this protein is Guanylate kinase.